We begin with the raw amino-acid sequence, 424 residues long: UDP-N-acetylglucosamine 1-carboxyvinyltransferase (424 aa).

22 to 23 (KN) contacts phosphoenolpyruvate. A UDP-N-acetyl-alpha-D-glucosamine-binding site is contributed by Arg95. The active-site Proton donor is Cys119. Residue Cys119 is modified to 2-(S-cysteinyl)pyruvic acid O-phosphothioketal. Residues 124–128 (RPVDQ), Asp311, and Ile333 contribute to the UDP-N-acetyl-alpha-D-glucosamine site.

Belongs to the EPSP synthase family. MurA subfamily.

It localises to the cytoplasm. The enzyme catalyses phosphoenolpyruvate + UDP-N-acetyl-alpha-D-glucosamine = UDP-N-acetyl-3-O-(1-carboxyvinyl)-alpha-D-glucosamine + phosphate. The protein operates within cell wall biogenesis; peptidoglycan biosynthesis. In terms of biological role, cell wall formation. Adds enolpyruvyl to UDP-N-acetylglucosamine. The polypeptide is UDP-N-acetylglucosamine 1-carboxyvinyltransferase (Polaromonas sp. (strain JS666 / ATCC BAA-500)).